The sequence spans 196 residues: Pyridoxal 5'-phosphate synthase subunit PdxT (196 aa).

46–48 (GES) is a binding site for L-glutamine. Cys-78 (nucleophile) is an active-site residue. Residues Arg-105 and 134 to 135 (IR) each bind L-glutamine. Active-site charge relay system residues include His-170 and Glu-172.

This sequence belongs to the glutaminase PdxT/SNO family. In the presence of PdxS, forms a dodecamer of heterodimers. Only shows activity in the heterodimer.

The catalysed reaction is aldehydo-D-ribose 5-phosphate + D-glyceraldehyde 3-phosphate + L-glutamine = pyridoxal 5'-phosphate + L-glutamate + phosphate + 3 H2O + H(+). It carries out the reaction L-glutamine + H2O = L-glutamate + NH4(+). It functions in the pathway cofactor biosynthesis; pyridoxal 5'-phosphate biosynthesis. Catalyzes the hydrolysis of glutamine to glutamate and ammonia as part of the biosynthesis of pyridoxal 5'-phosphate. The resulting ammonia molecule is channeled to the active site of PdxS. This is Pyridoxal 5'-phosphate synthase subunit PdxT from Pelotomaculum thermopropionicum (strain DSM 13744 / JCM 10971 / SI).